We begin with the raw amino-acid sequence, 493 residues long: MSQSLEEKSVQERTRIKNSRYESGVIPYAKMGYWNPDYQVKDTDVLALFRVTPQPGVDPIEAAAAVAGESSTATWTVVWTDLLTAADLYRAKAYKVDQVPNNPEQYFAYIAYELDLFEEGSIANLTASIIGNVFGFKAVKALRLEDMRLPFAYIKTFQGPATGVILERERLDKFGRPLLGCTTKPKLGLSGKNYGRVVYEALKGGLDFVKDDENINSQPFMRWRERYLFVMEAVNKAAAATGEVKGHYLNVTAATMEEMYARAQLAKELGSVIIMIDLVIGYTAIQTMAKWARDNDMILHLHRAGNSTYSRQKNHGMNFRVICKWMRMAGVDHIHAGTVVGKLEGDPIITRGFYKTLLLPKLERNLQEGLFFDMDWASLRKVMPVASGGIHAGQMHQLIHYLGEDVVLQFGGGTIGHPDGIQSGATANRVALEAMILARNENRDFLTEGPEILREAAKNCGALRTALDLWKDITFNYTSTDTSDFVETPTANI.

Residue asparagine 132 participates in substrate binding. Cysteine 181 is modified (S-nitrosocysteine). Substrate is bound at residue threonine 182. The active-site Proton acceptor is the lysine 184. Residue lysine 186 coordinates substrate. Lysine 210, aspartate 212, and glutamate 213 together coordinate Mg(2+). Residue lysine 210 is modified to N6-carboxylysine. Histidine 302 (proton acceptor) is an active-site residue. 3 residues coordinate substrate: arginine 303, histidine 335, and serine 387. At cysteine 460 the chain carries S-nitrosocysteine.

Belongs to the RuBisCO large chain family. Type I subfamily. As to quaternary structure, heterohexadecamer of 8 large chains and 8 small chains. Mg(2+) serves as cofactor.

Its subcellular location is the plastid. It is found in the chloroplast. It carries out the reaction 2 (2R)-3-phosphoglycerate + 2 H(+) = D-ribulose 1,5-bisphosphate + CO2 + H2O. It catalyses the reaction D-ribulose 1,5-bisphosphate + O2 = 2-phosphoglycolate + (2R)-3-phosphoglycerate + 2 H(+). RuBisCO catalyzes two reactions: the carboxylation of D-ribulose 1,5-bisphosphate, the primary event in carbon dioxide fixation, as well as the oxidative fragmentation of the pentose substrate in the photorespiration process. Both reactions occur simultaneously and in competition at the same active site. Carbon dioxide and oxygen bind in the same pocket of the enzyme in a similar manner. The sequence is that of Ribulose bisphosphate carboxylase large chain from Galdieria sulphuraria (Red alga).